We begin with the raw amino-acid sequence, 330 residues long: 2-methoxy-6-polyprenyl-1,4-benzoquinol methylase, mitochondrial (330 aa).

The transit peptide at 1 to 42 directs the protein to the mitochondrion; that stretch reads MAAPRSWALWSFCGCGWSRAVSGCRLPGLRSSSPRGPLGARL. Residues Thr117, Asp171, and 199–200 each bind S-adenosyl-L-methionine; that span reads DA.

Belongs to the class I-like SAM-binding methyltransferase superfamily. MenG/UbiE family. As to quaternary structure, component of a multi-subunit COQ enzyme complex, composed of at least COQ3, COQ4, COQ5, COQ6, COQ7 and COQ9. Interacts with PYURF; the interaction is direct, stabilizes COQ5 protein and associates PYURF with COQ enzyme complex.

The protein localises to the mitochondrion inner membrane. It carries out the reaction 2-methoxy-6-(all-trans-decaprenyl)benzene-1,4-diol + S-adenosyl-L-methionine = 5-methoxy-2-methyl-3-(all-trans-decaprenyl)benzene-1,4-diol + S-adenosyl-L-homocysteine + H(+). The protein operates within cofactor biosynthesis; ubiquinone biosynthesis. Methyltransferase required for the conversion of 2-decaprenyl-6-methoxy-1,4-benzoquinol (DDMQH2) to 2-decaprenyl-3-methyl-6-methoxy-1,4-benzoquinol (DMQH2). The sequence is that of 2-methoxy-6-polyprenyl-1,4-benzoquinol methylase, mitochondrial from Bos taurus (Bovine).